The sequence spans 228 residues: Ribonuclease 3 (228 aa).

Residues 5 to 127 (LTALQERLKH…LIGAVYLDAG (123 aa)) enclose the RNase III domain. Mg(2+) is bound at residue Glu-40. The active site involves Asp-44. Residues Asp-113 and Glu-116 each contribute to the Mg(2+) site. Glu-116 is a catalytic residue. The DRBM domain occupies 154–224 (DPKTELQEWL…AAAMLIRLKA (71 aa)).

The protein belongs to the ribonuclease III family. As to quaternary structure, homodimer. It depends on Mg(2+) as a cofactor.

Its subcellular location is the cytoplasm. It carries out the reaction Endonucleolytic cleavage to 5'-phosphomonoester.. Functionally, digests double-stranded RNA. Involved in the processing of primary rRNA transcript to yield the immediate precursors to the large and small rRNAs (23S and 16S). Processes some mRNAs, and tRNAs when they are encoded in the rRNA operon. Processes pre-crRNA and tracrRNA of type II CRISPR loci if present in the organism. The chain is Ribonuclease 3 from Variovorax paradoxus (strain S110).